Reading from the N-terminus, the 178-residue chain is CASP-like protein 4D1 (178 aa).

Topologically, residues M1–R14 are cytoplasmic. The helical transmembrane segment at T15–I35 threads the bilayer. Over S36–R60 the chain is Extracellular. The helical transmembrane segment at Y61 to I81 threads the bilayer. Over S82–A149 the chain is Cytoplasmic. The chain crosses the membrane as a helical span at residues S150–L170. Topologically, residues S171–S178 are extracellular.

It belongs to the Casparian strip membrane proteins (CASP) family. In terms of assembly, homodimer and heterodimers.

It is found in the cell membrane. The sequence is that of CASP-like protein 4D1 from Arabidopsis lyrata subsp. lyrata (Lyre-leaved rock-cress).